Reading from the N-terminus, the 901-residue chain is Translation initiation factor IF-2 (901 aa).

The disordered stretch occupies residues 48–313 (HLNREHGGSS…SSLQQGFTKP (266 aa)). Polar residues predominate over residues 68 to 82 (STLSVPGTGGKSKSV). The span at 106–226 (ALAKREAEEQ…RMAEANEGKW (121 aa)) shows a compositional bias: basic and acidic residues. Residues 263 to 277 (ARGRGGKAAKQKKGS) are compositionally biased toward basic residues. A compositionally biased stretch (basic and acidic residues) spans 278–291 (KLSESKADREEARA). Residues 400–569 (PRAPVVTIMG…LLQAEVLELK (170 aa)) form the tr-type G domain. A G1 region spans residues 409–416 (GHVDHGKT). 409–416 (GHVDHGKT) is a GTP binding site. Residues 434–438 (GITQH) form a G2 region. Residues 455–458 (DTPG) are G3. Residues 455-459 (DTPGH) and 509-512 (NKID) each bind GTP. The tract at residues 509 to 512 (NKID) is G4. The G5 stretch occupies residues 545–547 (SAK).

Belongs to the TRAFAC class translation factor GTPase superfamily. Classic translation factor GTPase family. IF-2 subfamily.

It is found in the cytoplasm. Its function is as follows. One of the essential components for the initiation of protein synthesis. Protects formylmethionyl-tRNA from spontaneous hydrolysis and promotes its binding to the 30S ribosomal subunits. Also involved in the hydrolysis of GTP during the formation of the 70S ribosomal complex. This Edwardsiella ictaluri (strain 93-146) protein is Translation initiation factor IF-2.